A 210-amino-acid chain; its full sequence is Pyridoxine/pyridoxamine 5'-phosphate oxidase (210 aa).

Residues 7–10 (REDY) and lysine 65 each bind substrate. Residues 60-65 (RVVLLK), 75-76 (FT), arginine 81, lysine 82, and glutamine 104 each bind FMN. Tyrosine 122, arginine 126, and serine 130 together coordinate substrate. FMN contacts are provided by residues 139-140 (QS) and tryptophan 183. Residue 189–191 (RLH) coordinates substrate. Position 193 (arginine 193) interacts with FMN.

The protein belongs to the pyridoxamine 5'-phosphate oxidase family. In terms of assembly, homodimer. The cofactor is FMN.

It catalyses the reaction pyridoxamine 5'-phosphate + O2 + H2O = pyridoxal 5'-phosphate + H2O2 + NH4(+). The enzyme catalyses pyridoxine 5'-phosphate + O2 = pyridoxal 5'-phosphate + H2O2. The protein operates within cofactor metabolism; pyridoxal 5'-phosphate salvage; pyridoxal 5'-phosphate from pyridoxamine 5'-phosphate: step 1/1. Its pathway is cofactor metabolism; pyridoxal 5'-phosphate salvage; pyridoxal 5'-phosphate from pyridoxine 5'-phosphate: step 1/1. Catalyzes the oxidation of either pyridoxine 5'-phosphate (PNP) or pyridoxamine 5'-phosphate (PMP) into pyridoxal 5'-phosphate (PLP). The protein is Pyridoxine/pyridoxamine 5'-phosphate oxidase of Actinobacillus succinogenes (strain ATCC 55618 / DSM 22257 / CCUG 43843 / 130Z).